The sequence spans 148 residues: Deoxyuridine 5'-triphosphate nucleotidohydrolase (148 aa).

Residues R67–G69, N80, L84–D86, and M94 each bind substrate.

The protein belongs to the dUTPase family. Requires Mg(2+) as cofactor.

It carries out the reaction dUTP + H2O = dUMP + diphosphate + H(+). It functions in the pathway pyrimidine metabolism; dUMP biosynthesis; dUMP from dCTP (dUTP route): step 2/2. In terms of biological role, this enzyme is involved in nucleotide metabolism: it produces dUMP, the immediate precursor of thymidine nucleotides and it decreases the intracellular concentration of dUTP so that uracil cannot be incorporated into DNA. The chain is Deoxyuridine 5'-triphosphate nucleotidohydrolase from Ralstonia pickettii (strain 12J).